Reading from the N-terminus, the 662-residue chain is Pro-neuregulin-1, membrane-bound isoform (662 aa).

The propeptide occupies 1–13 (MSERKEGRGKGKG). Residues 1-52 (MSERKEGRGKGKGKKKDRGSRGKPGPAEGDPSPALPPRLKEMKSQESAAGSK) form a disordered region. The Extracellular segment spans residues 14-265 (KKKDRGSRGK…SKAEELYQKR (252 aa)). Residues 37–128 (PRLKEMKSQE…GNDSASANIT (92 aa)) enclose the Ig-like C2-type domain. C57 and C112 form a disulfide bridge. 3 N-linked (GlcNAc...) asparagine glycosylation sites follow: N120, N126, and N164. One can recognise an EGF-like domain in the interval 178 to 222 (HLIKCAEKEKTFCVNGGECFTVKDLSNPSRYLCKCPNEFTGDRCQ). Disulfide bonds link C182/C196, C190/C210, and C212/C221. Residues 266–288 (VLTITGICIALLVVGIMCVVAYC) traverse the membrane as a helical segment. Topologically, residues 289–662 (KTKKQRQKLH…VIANQDPIAV (374 aa)) are cytoplasmic. Residues 358–373 (SHYTSTAHHSTTVTQT) show a composition bias toward low complexity. 3 disordered regions span residues 358–383 (SHYT…NGHT), 398–480 (SVEN…PVSS), and 547–610 (YETT…DTPF). Residues 374–383 (PSHSWSNGHT) show a composition bias toward polar residues. Residues 410-420 (GPRGRLHGLGG) show a composition bias toward gly residues. A compositionally biased stretch (basic and acidic residues) spans 425–445 (SFLRHARETPDSYRDSPHSER). Residues 564–574 (TNSRRAKRTKP) are compositionally biased toward basic residues. A compositionally biased stretch (low complexity) spans 585–596 (DSNTSSVSSNSE).

Belongs to the neuregulin family. As to quaternary structure, the cytoplasmic domain interacts with the LIM domain region of LIMK1. Forms a ternary complex with ERBB3 and ITGAV:ITGB3 or ITGA6:ITGB4. Interacts with NRDC and BACE1. Post-translationally, proteolytic cleavage close to the plasma membrane on the external face leads to the release of the soluble growth factor form. N- and O-glycosylated. Extensive glycosylation precedes the proteolytic cleavage. In terms of tissue distribution, widely expressed. Most tissues contain isoform alpha2A and isoform alpha2B. Isoform Alpha2 and isoform beta2 are the predominant forms in mesenchymal and non-neuronal organs. Isoform Beta1 is enriched in brain and spinal cord, but not in muscle and heart. Isoform Alpha2C is highly expressed in spinal cord, moderately in lung, brain, ovary, and stomach, in low amounts in the kidney, skin and heart and not detected in the liver, spleen, and placenta.

It localises to the cell membrane. The protein localises to the secreted. In terms of biological role, direct ligand for ERBB3 and ERBB4 tyrosine kinase receptors. Concomitantly recruits ERBB1 and ERBB2 coreceptors, resulting in ligand-stimulated tyrosine phosphorylation and activation of the ERBB receptors. The multiple isoforms perform diverse functions such as inducing growth and differentiation of epithelial, glial, neuronal, and skeletal muscle cells; inducing expression of acetylcholine receptor in synaptic vesicles during the formation of the neuromuscular junction; stimulating lobuloalveolar budding and milk production in the mammary gland and inducing differentiation of mammary tumor cells; stimulating Schwann cell proliferation; implication in the development of the myocardium such as trabeculation of the developing heart. Binds to ERBB4 and ERBB3. Acts as a ligand for integrins and binds (via EGF domain) to integrins ITGAV:ITGB3 or ITGA6:ITGB4. Its binding to integrins and subsequent ternary complex formation with integrins and ERRB3 are essential for NRG1-ERBB signaling. Induces the phosphorylation and activation of MAPK3/ERK1, MAPK1/ERK2 and AKT1, and ligand-dependent ERBB4 endocytosis is essential for the NRG1-mediated activation of these kinases in neurons. The sequence is that of Pro-neuregulin-1, membrane-bound isoform (Nrg1) from Rattus norvegicus (Rat).